The following is an 812-amino-acid chain: Probable phosphoketolase (812 aa).

It belongs to the XFP family. The cofactor is thiamine diphosphate.

The protein is Probable phosphoketolase of Thermosynechococcus vestitus (strain NIES-2133 / IAM M-273 / BP-1).